The chain runs to 205 residues: MFLRHCITFTLIALLAGCAGFGSREALQGHGDPQQWRAHKEQLSSLDGWQINGKVGIRAPRDSGSGTLFWLQRQDYYDIRLAGPLGRGAARLTGRPGGVVLEVANQGRYEAASPEALLEEQLGWQLPVSHLVWWVRGLPAPDSKSKLTLDGDSRLASLDQDGWQVQYLSYTEQNGYWLPERLKLHGKDLDVTLVVKDWQPRQLGH.

The first 17 residues, 1–17, serve as a signal peptide directing secretion; the sequence is MFLRHCITFTLIALLAG. C18 carries N-palmitoyl cysteine lipidation. The S-diacylglycerol cysteine moiety is linked to residue C18.

It belongs to the LolB family. Monomer.

It is found in the cell outer membrane. Its function is as follows. Plays a critical role in the incorporation of lipoproteins in the outer membrane after they are released by the LolA protein. The polypeptide is Outer-membrane lipoprotein LolB (Pseudomonas putida (strain W619)).